A 155-amino-acid chain; its full sequence is Large ribosomal subunit protein uL22c (155 aa).

The protein belongs to the universal ribosomal protein uL22 family. In terms of assembly, part of the 50S ribosomal subunit.

The protein resides in the plastid. Its subcellular location is the chloroplast. In terms of biological role, this protein binds specifically to 23S rRNA. The globular domain of the protein is located near the polypeptide exit tunnel on the outside of the subunit, while an extended beta-hairpin is found that lines the wall of the exit tunnel in the center of the 70S ribosome. In Nicotiana tomentosiformis (Tobacco), this protein is Large ribosomal subunit protein uL22c (rpl22).